We begin with the raw amino-acid sequence, 125 residues long: Small ribosomal subunit protein uS12 (125 aa).

Residues 9–31 (RQGREVEKIKSKSPAMENSPQRR) form a disordered region. Position 89 is a 3-methylthioaspartic acid (D89). The disordered stretch occupies residues 105 to 125 (QGVKDRKQSRSKYGAKRPKAK). Basic residues predominate over residues 113-125 (SRSKYGAKRPKAK).

Belongs to the universal ribosomal protein uS12 family. Part of the 30S ribosomal subunit. Contacts proteins S8 and S17. May interact with IF1 in the 30S initiation complex.

With S4 and S5 plays an important role in translational accuracy. Its function is as follows. Interacts with and stabilizes bases of the 16S rRNA that are involved in tRNA selection in the A site and with the mRNA backbone. Located at the interface of the 30S and 50S subunits, it traverses the body of the 30S subunit contacting proteins on the other side and probably holding the rRNA structure together. The combined cluster of proteins S8, S12 and S17 appears to hold together the shoulder and platform of the 30S subunit. This Polaromonas naphthalenivorans (strain CJ2) protein is Small ribosomal subunit protein uS12.